Here is a 373-residue protein sequence, read N- to C-terminus: UDP-N-acetylglucosamine--N-acetylmuramyl-(pentapeptide) pyrophosphoryl-undecaprenol N-acetylglucosamine transferase (373 aa).

UDP-N-acetyl-alpha-D-glucosamine contacts are provided by residues 16–18 (TGG), Asn-128, Arg-164, Ser-192, Ile-250, and Gln-295.

Belongs to the glycosyltransferase 28 family. MurG subfamily.

The protein resides in the cell inner membrane. The catalysed reaction is di-trans,octa-cis-undecaprenyl diphospho-N-acetyl-alpha-D-muramoyl-L-alanyl-D-glutamyl-meso-2,6-diaminopimeloyl-D-alanyl-D-alanine + UDP-N-acetyl-alpha-D-glucosamine = di-trans,octa-cis-undecaprenyl diphospho-[N-acetyl-alpha-D-glucosaminyl-(1-&gt;4)]-N-acetyl-alpha-D-muramoyl-L-alanyl-D-glutamyl-meso-2,6-diaminopimeloyl-D-alanyl-D-alanine + UDP + H(+). It functions in the pathway cell wall biogenesis; peptidoglycan biosynthesis. In terms of biological role, cell wall formation. Catalyzes the transfer of a GlcNAc subunit on undecaprenyl-pyrophosphoryl-MurNAc-pentapeptide (lipid intermediate I) to form undecaprenyl-pyrophosphoryl-MurNAc-(pentapeptide)GlcNAc (lipid intermediate II). The sequence is that of UDP-N-acetylglucosamine--N-acetylmuramyl-(pentapeptide) pyrophosphoryl-undecaprenol N-acetylglucosamine transferase from Paraburkholderia phymatum (strain DSM 17167 / CIP 108236 / LMG 21445 / STM815) (Burkholderia phymatum).